We begin with the raw amino-acid sequence, 159 residues long: Phosphopantetheine adenylyltransferase (159 aa).

A substrate-binding site is contributed by T9. Residues 9–10 (TF) and H17 each bind ATP. Substrate contacts are provided by K41, L73, and R87. Residues 88-90 (GLR), E98, and 123-129 (YSFISST) each bind ATP.

This sequence belongs to the bacterial CoaD family. In terms of assembly, homohexamer. It depends on Mg(2+) as a cofactor.

It is found in the cytoplasm. The enzyme catalyses (R)-4'-phosphopantetheine + ATP + H(+) = 3'-dephospho-CoA + diphosphate. The protein operates within cofactor biosynthesis; coenzyme A biosynthesis; CoA from (R)-pantothenate: step 4/5. In terms of biological role, reversibly transfers an adenylyl group from ATP to 4'-phosphopantetheine, yielding dephospho-CoA (dPCoA) and pyrophosphate. The polypeptide is Phosphopantetheine adenylyltransferase (Pseudomonas aeruginosa (strain LESB58)).